Here is a 121-residue protein sequence, read N- to C-terminus: Neuromedin-B (121 aa).

An N-terminal signal peptide occupies residues 1–24; sequence MTLRARGARLLGGLLFFTLLAAGA. M56 carries the post-translational modification Methionine amide. Residues 60–121 constitute a propeptide that is removed on maturation; it reads SLEPPNPSLL…RRLLVQTLEK (62 aa).

The protein belongs to the bombesin/neuromedin-B/ranatensin family. Higher expression in the central nervous system (CNS) than in peripheral tissues. Highest levels are found in the olfactory bulb. Relatively high levels in the CNS (including the cerebral cortex, cerebellum, spinal cord, medulla oblongata, midbrain, hypothalamus, hippocampus, and hypophysis) and in peripheral tissues such as the pancreas, adrenal gland, testis, ovary and cecum. Moderate levels are found in the rectum, heart and pons with low expression levels detected in the bone marrow and duodenum. Other tissues show no or low levels of expression.

It is found in the secreted. It localises to the cell projection. The protein resides in the neuron projection. In terms of biological role, stimulates smooth muscle contraction. Induces sighing by acting directly on the pre-Botzinger complex, a cluster of several thousand neurons in the ventrolateral medulla responsible for inspiration during respiratory activity. Contributes to the induction of sneezing following exposure to chemical irritants or allergens which causes release of NMB by nasal sensory neurons and activation of NMBR-expressing neurons in the sneeze-evoking region of the brainstem. These in turn activate neurons of the caudal ventral respiratory group, giving rise to the sneezing response. Contributes to induction of acute itch, possibly through activation of the NMBR receptor on dorsal root ganglion neurons. Increases expression of NMBR and steroidogenic mediators STAR, CYP11A1 and HSD3B1 in Leydig cells, induces secretion of testosterone by Leydig cells and also promotes Leydig cell proliferation. Plays a role in the innate immune response to influenza A virus infection by enhancing interferon alpha expression and reducing expression of IL6. Plays a role in CSF1-induced proliferation of osteoclast precursors by contributing to positive regulation of the expression of the CSF1 receptor CSF1R. The sequence is that of Neuromedin-B (NMB) from Sus scrofa (Pig).